A 168-amino-acid chain; its full sequence is Large ribosomal subunit protein uL10 (168 aa).

It belongs to the universal ribosomal protein uL10 family. In terms of assembly, part of the ribosomal stalk of the 50S ribosomal subunit. The N-terminus interacts with L11 and the large rRNA to form the base of the stalk. The C-terminus forms an elongated spine to which L12 dimers bind in a sequential fashion forming a multimeric L10(L12)X complex.

Forms part of the ribosomal stalk, playing a central role in the interaction of the ribosome with GTP-bound translation factors. The polypeptide is Large ribosomal subunit protein uL10 (Paracidovorax citrulli (strain AAC00-1) (Acidovorax citrulli)).